We begin with the raw amino-acid sequence, 85 residues long: Large ribosomal subunit protein bL27 (85 aa).

Belongs to the bacterial ribosomal protein bL27 family.

The polypeptide is Large ribosomal subunit protein bL27 (Azobacteroides pseudotrichonymphae genomovar. CFP2).